The chain runs to 155 residues: Microsomal glutathione S-transferase 1 (155 aa).

Residues 3 to 9 are Lumenal-facing; it reads DLKQLMD. A helical membrane pass occupies residues 10–33; that stretch reads NEVLMAFTSYATIILAKMMFLSSA. Over 34-62 the chain is Cytoplasmic; sequence TAFQRLTNKVFANPEDCAGFGKGENAKKF. Residue Arg38 coordinates glutathione. N6-acetyllysine is present on residues Lys42, Lys55, and Lys60. Residues 63-96 traverse the membrane as a helical segment; sequence LRTDEKVERVRRAHLNDLENIVPFLGIGLLYSLS. Glutathione-binding residues include Arg73, Arg74, His76, and Glu81. Tyr93 is modified (3'-nitrotyrosine; in vitro). Residues 97–99 lie on the Lumenal side of the membrane; that stretch reads GPD. The helical transmembrane segment at 100 to 123 threads the bilayer; sequence LSTALIHFRIFVGARIYHTIAYLT. Tyr121 is a binding site for glutathione. At 124-128 the chain is on the cytoplasmic side; it reads PLPQP. A helical transmembrane segment spans residues 129 to 148; sequence NRGLAFFVGYGVTLSMAYRL. Over 149-155 the chain is Lumenal; it reads LRSRLYL.

Belongs to the MAPEG family. Homotrimer; The trimer binds only one molecule of glutathione. In terms of processing, in vitro, peroxynitrite induces nitration at Tyr-93 which activates the enzyme. As to expression, highest in the liver, followed by kidney and testis and much lower in seminal vesicles, spleen, lung and brain.

It localises to the endoplasmic reticulum membrane. It is found in the mitochondrion outer membrane. It carries out the reaction RX + glutathione = an S-substituted glutathione + a halide anion + H(+). Its activity is regulated as follows. In vitro, can be activated by reagents that attack Cys-50 sulfhydryl, such as N-ethylmaleimide and via nitration of Tyr-93 by peroxynitrite. Conjugation of reduced glutathione to a wide number of exogenous and endogenous hydrophobic electrophiles. In Rattus norvegicus (Rat), this protein is Microsomal glutathione S-transferase 1 (Mgst1).